Here is a 251-residue protein sequence, read N- to C-terminus: Isoprenyl transferase (251 aa).

D24 is an active-site residue. Residue D24 participates in Mg(2+) binding. Substrate is bound by residues 25–28, W29, R37, H41, and 69–71; these read GNGR and STE. N72 functions as the Proton acceptor in the catalytic mechanism. Residues W73, R75, R186, and 192–194 contribute to the substrate site; that span reads RIS. E205 lines the Mg(2+) pocket.

The protein belongs to the UPP synthase family. As to quaternary structure, homodimer. Mg(2+) serves as cofactor.

Its function is as follows. Catalyzes the condensation of isopentenyl diphosphate (IPP) with allylic pyrophosphates generating different type of terpenoids. This chain is Isoprenyl transferase, found in Chromobacterium violaceum (strain ATCC 12472 / DSM 30191 / JCM 1249 / CCUG 213 / NBRC 12614 / NCIMB 9131 / NCTC 9757 / MK).